Reading from the N-terminus, the 175-residue chain is DPY30 domain-containing protein 1 (175 aa).

Residues 94–112 (QQKEKQKSEDFETGQEKSF) show a composition bias toward basic and acidic residues. 2 disordered regions span residues 94–134 (QQKE…QAEE) and 152–175 (APNL…SAPP).

It belongs to the dpy-30 family. As to quaternary structure, component of the axonemal radial spoke complex 1 (RS1), at least composed of spoke head proteins RSPH1, RSPH3, RSPH9 and the cilia-specific component RSPH4A or sperm-specific component RSPH6A, spoke stalk proteins RSPH14, DNAJB13, DYDC1, ROPN1L and NME5, and the anchor protein IQUB. Interacts with SH3GL3.

The protein resides in the cytoplasm. It is found in the cytoskeleton. It localises to the flagellum axoneme. Functions as part of axonemal radial spoke complexes that play an important part in the motility of sperm and cilia. Plays a crucial role during acrosome biogenesis. The sequence is that of DPY30 domain-containing protein 1 (Dydc1) from Mus musculus (Mouse).